A 790-amino-acid chain; its full sequence is Sorting nexin mvp1 (790 aa).

Polar residues-rich tracts occupy residues 1–10 and 20–40; these read MSLFGSSPPN and KTAN…TRSG. Disordered regions lie at residues 1-62, 215-342, and 373-406; these read MSLF…RKQR, PNLS…SIHN, and AITG…HVRS. The span at 225 to 240 shows a compositional bias: pro residues; that stretch reads PQRPVTPPKAPTPSPP. Over residues 241–252 the composition is skewed to low complexity; it reads KQQQQQQHQPPT. A compositionally biased stretch (basic and acidic residues) spans 269–283; sequence DLHKGHNHGPLEHST. The span at 297-319 shows a compositional bias: polar residues; that stretch reads NDLNGNDAVSYSTSPEVTTTSSA. 2 stretches are compositionally biased toward low complexity: residues 324 to 339 and 386 to 400; these read TTST…GPSS and QSVS…PNRS. Residues 411-525 form the PX domain; it reads EENILVTLMP…IMFLTVPTEL (115 aa). Arginine 447, serine 449, lysine 473, and arginine 492 together coordinate a 1,2-diacyl-sn-glycero-3-phospho-(1D-myo-inositol-3-phosphate).

Belongs to the sorting nexin family.

Its subcellular location is the cytoplasm. The protein localises to the membrane. Its function is as follows. Required for vacuolar protein sorting. The sequence is that of Sorting nexin mvp1 (vsp-1) from Neurospora crassa (strain ATCC 24698 / 74-OR23-1A / CBS 708.71 / DSM 1257 / FGSC 987).